A 131-amino-acid chain; its full sequence is Cell cycle protein GpsB (131 aa).

A coiled-coil region spans residues 39 to 76; that stretch reads LDGIIRDYEAFTNEIDRLKEENTKLFSRVDELTKQLSV. The interval 111–131 is disordered; the sequence is KLSDSSVDNHDDGNHSDVDQY. The segment covering 117 to 131 has biased composition (basic and acidic residues); the sequence is VDNHDDGNHSDVDQY.

It belongs to the GpsB family. In terms of assembly, forms polymers through the coiled coil domains. Interacts with PBP1, MreC and EzrA.

It is found in the cytoplasm. In terms of biological role, divisome component that associates with the complex late in its assembly, after the Z-ring is formed, and is dependent on DivIC and PBP2B for its recruitment to the divisome. Together with EzrA, is a key component of the system that regulates PBP1 localization during cell cycle progression. Its main role could be the removal of PBP1 from the cell pole after pole maturation is completed. Also contributes to the recruitment of PBP1 to the division complex. Not essential for septum formation. The protein is Cell cycle protein GpsB of Lacticaseibacillus casei (strain BL23) (Lactobacillus casei).